Reading from the N-terminus, the 138-residue chain is MALLPDKEKLLRNFLRCANWEEKYLYIIELGQRLPELRAEDGSPQNSIQGCQSQVWIVMRQNAQGIIELQGDSDAAIVKGLIAVVFILYDQMTPQDIVNFDVRPWFEKMALTQHLTPSRSQGLEAMIRAIRAKAAALS.

The Cysteine persulfide intermediate role is filled by Cys-51.

The protein belongs to the SufE family. As to quaternary structure, homodimer. Interacts with SufS.

It localises to the cytoplasm. The protein operates within cofactor biosynthesis; iron-sulfur cluster biosynthesis. Its function is as follows. Participates in cysteine desulfuration mediated by SufS. Cysteine desulfuration mobilizes sulfur from L-cysteine to yield L-alanine and constitutes an essential step in sulfur metabolism for biosynthesis of a variety of sulfur-containing biomolecules. Functions as a sulfur acceptor for SufS, by mediating the direct transfer of the sulfur atom from the S-sulfanylcysteine of SufS, an intermediate product of cysteine desulfuration process. The protein is Cysteine desulfuration protein SufE of Shigella flexneri serotype 5b (strain 8401).